The sequence spans 432 residues: Probable imidazolonepropionase (432 aa).

4-imidazolone-5-propanoate is bound by residues Tyr-159 and His-192. Tyr-159 is an N-formimidoyl-L-glutamate binding site. His-260 lines the Fe(3+) pocket. His-260 contacts Zn(2+). Residue Glu-263 participates in 4-imidazolone-5-propanoate binding. Asp-334 is a binding site for Fe(3+). Asp-334 lines the Zn(2+) pocket. Asn-336 contributes to the N-formimidoyl-L-glutamate binding site.

It belongs to the metallo-dependent hydrolases superfamily. HutI family. It depends on Zn(2+) as a cofactor. The cofactor is Fe(3+).

The enzyme catalyses 4-imidazolone-5-propanoate + H2O = N-formimidoyl-L-glutamate. It functions in the pathway amino-acid degradation; L-histidine degradation into L-glutamate; N-formimidoyl-L-glutamate from L-histidine: step 3/3. The polypeptide is Probable imidazolonepropionase (amdhd1) (Xenopus tropicalis (Western clawed frog)).